The primary structure comprises 163 residues: Lipoprotein signal peptidase (163 aa).

3 helical membrane-spanning segments follow: residues 11-31 (ILIA…IATT), 63-83 (KMTF…YFFI), and 88-108 (YNLF…GNFI). Residues D118 and D136 contribute to the active site. The chain crosses the membrane as a helical span at residues 131-151 (IFNIADSSLTIGVILIIIALL).

This sequence belongs to the peptidase A8 family.

Its subcellular location is the cell membrane. The catalysed reaction is Release of signal peptides from bacterial membrane prolipoproteins. Hydrolyzes -Xaa-Yaa-Zaa-|-(S,diacylglyceryl)Cys-, in which Xaa is hydrophobic (preferably Leu), and Yaa (Ala or Ser) and Zaa (Gly or Ala) have small, neutral side chains.. It functions in the pathway protein modification; lipoprotein biosynthesis (signal peptide cleavage). Functionally, this protein specifically catalyzes the removal of signal peptides from prolipoproteins. The protein is Lipoprotein signal peptidase of Staphylococcus aureus.